The sequence spans 67 residues: Guanine nucleotide-binding protein G(I)/G(S)/G(O) subunit gamma-13 (67 aa).

A Cysteine methyl ester modification is found at C64. C64 is lipidated: S-farnesyl cysteine. Positions 65-67 (TIL) are cleaved as a propeptide — removed in mature form.

It belongs to the G protein gamma family. In terms of assembly, g proteins are composed of 3 units, alpha, beta and gamma.

It is found in the cell membrane. Functionally, guanine nucleotide-binding proteins (G proteins) are involved as a modulator or transducer in various transmembrane signaling systems. The beta and gamma chains are required for the GTPase activity, for replacement of GDP by GTP, and for G protein-effector interaction. The polypeptide is Guanine nucleotide-binding protein G(I)/G(S)/G(O) subunit gamma-13 (GNG13) (Homo sapiens (Human)).